The following is a 553-amino-acid chain: Putative transport protein Ent638_0015 (553 aa).

A run of 5 helical transmembrane segments spans residues 4–24, 28–48, 65–85, 95–115, and 158–178; these read IALTVSVLALVAVVGLWIGNI, GVGLGIGGVLFGGIFIGHFAE, FGLILFVYTIGIQVGPGFFAS, LFALGIVVMGGVVTAILHKLF, and MSYAMAYPFGICGILLTMWLV. RCK C-terminal domains lie at 191–276 and 279–361; these read KKHE…VIGQ and ETSL…MVGN. 6 helical membrane-spanning segments follow: residues 371 to 391, 403 to 425, 439 to 459, 464 to 484, 493 to 513, and 533 to 553; these read MLPVFIGIGLGVLLGSIPLYV, AGGPLIMALILGRIGCIGKLYWF, IVLFLSVVGLKSGGDFIDTLA, ISWIGYGFFITAVPLLTIGIL, YLTLCGMLAGSMTDPPALAFA, and LVMFLRIITPQLLAVLFWGMG.

The protein belongs to the AAE transporter (TC 2.A.81) family. YidE subfamily.

The protein resides in the cell membrane. The chain is Putative transport protein Ent638_0015 from Enterobacter sp. (strain 638).